The primary structure comprises 362 residues: Methylthioribose-1-phosphate isomerase (362 aa).

Asp-252 serves as the catalytic Proton donor.

The protein belongs to the eIF-2B alpha/beta/delta subunits family. MtnA subfamily.

Its subcellular location is the cytoplasm. It localises to the nucleus. It catalyses the reaction 5-(methylsulfanyl)-alpha-D-ribose 1-phosphate = 5-(methylsulfanyl)-D-ribulose 1-phosphate. The protein operates within amino-acid biosynthesis; L-methionine biosynthesis via salvage pathway; L-methionine from S-methyl-5-thio-alpha-D-ribose 1-phosphate: step 1/6. Its function is as follows. Catalyzes the interconversion of methylthioribose-1-phosphate (MTR-1-P) into methylthioribulose-1-phosphate (MTRu-1-P). The polypeptide is Methylthioribose-1-phosphate isomerase (Drosophila persimilis (Fruit fly)).